The chain runs to 178 residues: Fatty-acid and retinol-binding protein 1 (178 aa).

Positions 1-16 (MYHRLILLALVGTTMA) are cleaved as a signal peptide. Coiled coils occupy residues 67–89 (DAAL…ELRN) and 130–153 (KQAA…ELKV).

Belongs to the fatty-acid and retinol-binding protein (FARBP) family. Not glycosylated.

Its subcellular location is the secreted. Binds retinol. Also binds the fluorescent fatty acid 11-((5-dimethylaminonaphthalene-1-sulfonyl)amino)undecanoic acid (DAUDA). The long chain fatty acid oleic acid can act competitively to displace bound DAUDA and retinol. The chain is Fatty-acid and retinol-binding protein 1 from Brugia malayi (Filarial nematode worm).